Here is a 452-residue protein sequence, read N- to C-terminus: Pup--protein ligase (452 aa).

E9 contributes to the Mg(2+) binding site. ATP is bound at residue R53. Residue Y55 participates in Mg(2+) binding. D57 functions as the Proton acceptor in the catalytic mechanism. E63 is a binding site for Mg(2+). Positions 66 and 419 each coordinate ATP.

It belongs to the Pup ligase/Pup deamidase family. Pup-conjugating enzyme subfamily.

It catalyses the reaction ATP + [prokaryotic ubiquitin-like protein]-L-glutamate + [protein]-L-lysine = ADP + phosphate + N(6)-([prokaryotic ubiquitin-like protein]-gamma-L-glutamyl)-[protein]-L-lysine.. The protein operates within protein degradation; proteasomal Pup-dependent pathway. Its pathway is protein modification; protein pupylation. Its function is as follows. Catalyzes the covalent attachment of the prokaryotic ubiquitin-like protein modifier Pup to the proteasomal substrate proteins, thereby targeting them for proteasomal degradation. This tagging system is termed pupylation. The ligation reaction involves the side-chain carboxylate of the C-terminal glutamate of Pup and the side-chain amino group of a substrate lysine. The polypeptide is Pup--protein ligase (Actinosynnema mirum (strain ATCC 29888 / DSM 43827 / JCM 3225 / NBRC 14064 / NCIMB 13271 / NRRL B-12336 / IMRU 3971 / 101)).